The primary structure comprises 322 residues: ATP-dependent 6-phosphofructokinase (322 aa).

ATP is bound at residue G11. 21 to 25 (RAVVR) is a binding site for ADP. ATP is bound by residues 72 to 73 (RC) and 102 to 105 (GDGS). Mg(2+) is bound at residue D103. 127-129 (TID) serves as a coordination point for substrate. D129 serves as the catalytic Proton acceptor. ADP is bound at residue R156. Substrate contacts are provided by residues R164 and 171-173 (MGR). Residues 187 to 189 (GAE), R213, and 215 to 217 (KKH) contribute to the ADP site. Substrate contacts are provided by residues E224, R245, and 251–254 (HVQR).

This sequence belongs to the phosphofructokinase type A (PFKA) family. ATP-dependent PFK group I subfamily. Prokaryotic clade 'B1' sub-subfamily. In terms of assembly, homotetramer. Requires Mg(2+) as cofactor.

The protein resides in the cytoplasm. The enzyme catalyses beta-D-fructose 6-phosphate + ATP = beta-D-fructose 1,6-bisphosphate + ADP + H(+). The protein operates within carbohydrate degradation; glycolysis; D-glyceraldehyde 3-phosphate and glycerone phosphate from D-glucose: step 3/4. Allosterically activated by ADP and other diphosphonucleosides, and allosterically inhibited by phosphoenolpyruvate. In terms of biological role, catalyzes the phosphorylation of D-fructose 6-phosphate to fructose 1,6-bisphosphate by ATP, the first committing step of glycolysis. The sequence is that of ATP-dependent 6-phosphofructokinase from Staphylococcus aureus (strain MRSA252).